Consider the following 366-residue polypeptide: Inhibin alpha chain (366 aa).

The first 18 residues, 1 to 18 (MVLHLLLFLLLTPQGGHS), serve as a signal peptide directing secretion. Positions 19-61 (CQGLELARELVLAKVRALFLDALGPPAVTREGGDPGVRRLPRR) are excised as a propeptide. Positions 62–232 (HALGGFTHRG…PPSGGERARR (171 aa)) are cleaved as a propeptide — inhibin alpha N-terminal region. 2 N-linked (GlcNAc...) asparagine glycosylation sites follow: asparagine 146 and asparagine 268. 3 disulfide bridges follow: cysteine 262–cysteine 328, cysteine 291–cysteine 363, and cysteine 295–cysteine 365. An N-linked (GlcNAc...) asparagine; partial glycan is attached at asparagine 302.

The protein belongs to the TGF-beta family. Dimeric, linked by one or more disulfide bonds. Activin B is a dimer of alpha and beta-B. Inhibin A is a dimer of alpha and beta-A. Inhibin B is a dimer of alpha and beta-B. Interacts with TGFBR3L; this interaction regulates female fertility. In terms of processing, proteolytic processing yields a number of bioactive forms. The 20/23 kDa forms consist solely of the mature alpha chain, the 26/29 kDa forms consist of the most N-terminal propeptide linked through a disulfide bond to the mature alpha chain, the 50/53 kDa forms encompass the entire proprotein. Each type can be furthermore either mono- or diglycosylated, causing the mass difference. Originally found in ovary (granulosa cells) and testis (Sertoli cells), but widely distributed in many tissues including brain and placenta. In adrenal cortex expression is limited to the zona reticularis and the innermost zona fasciculata in the normal gland, extending centripetally into the zona fasciculata in hyperplasia. Also found in adrenocortical tumors. Also expressed in prostate epithelium of benign prostatic hyperplasia, in regions of basal cell hyperplasia and in nonmalignant regions of high grade prostate cancer. Only circulating inhibin B is found in male, whereas circulating inhibins A and B are found in female.

It localises to the secreted. Its function is as follows. Inhibins and activins inhibit and activate, respectively, the secretion of follitropin by the pituitary gland. Inhibins/activins are involved in regulating a number of diverse functions such as hypothalamic and pituitary hormone secretion, gonadal hormone secretion, germ cell development and maturation, erythroid differentiation, insulin secretion, nerve cell survival, embryonic axial development or bone growth, depending on their subunit composition. Inhibins appear to oppose the functions of activins. In terms of biological role, inhibin A is a dimer of alpha/INHA and beta-A/INHBA that functions as a feedback regulator in the hypothalamic-pituitary-gonadal (HPG) axis. Inhibits the secretion of FSH from the anterior pituitary gland by acting on pituitary gonadotrope cells. Antagonizes activin A by binding to the proteoglycan, betaglycan, and forming a stable complex with and, thereby, sequestering type II activin receptors while excluding type I receptor. Inhibin B is a dimer of alpha and beta-B that plays a crucial role in the regulation of the reproductive system by inhibiting the secretion of follicle-stimulating hormone (FSH) from the anterior pituitary gland. Thereby, maintains reproductive homeostasis in both males and females. Acts as a more potent suppressor of FSH release than inhibin A. Functions as competitive receptor antagonist binding activin type II receptors with high affinity in the presence of the TGF-beta type III coreceptor/TGFBR3L. The sequence is that of Inhibin alpha chain (INHA) from Homo sapiens (Human).